The chain runs to 619 residues: Adagio protein 3 (619 aa).

One can recognise a PAS domain in the interval 44–123 (VGMFYYPMTP…SEIRRCLEEG (80 aa)). Cys91 carries the post-translational modification S-4a-FMN cysteine. One can recognise a PAC domain in the interval 127–168 (QGELLNFRKDGTPLVNRLRLAPIRDDDGTITHVIGIQVFSET). In terms of domain architecture, F-box spans 211–257 (ILQLSDEVLAHNILSRLTPRDVASIGSACRRLRQLTKNESVRKMVCQ). 5 Kelch repeats span residues 304–354 (SRCN…TSSP), 357–404 (RWGH…AGGT), 409–457 (RSWH…PTSW), 462–513 (RLGH…ECSA), and 523–571 (RLDH…NVPG).

It belongs to the ADAGIO family. Interacts with ADO1 (via Kelch repeats), ADO2 (via Kelch repeats), SKP1A/ASK1, SKP1B/ASK2, ASK3, SKP1K/ASK11, ASK12, ASK13 and SKP1N/ASK14. Interacts (via Kelch repeats) with CDF1, CDF2 and CDF3. Interacts (via N-terminus) with CO and GI (via N-terminus) in a blue-light-dependent manner. FMN binds covalently to cysteine after exposure to blue light and is reversed in the dark. As to expression, highly expressed in stomata and leaves and to a lower extent in seeds, roots, rosettes, stems and siliques. Also present in sepals and anther filaments.

The protein resides in the nucleus. Its subcellular location is the cytoplasm. The protein operates within protein modification; protein ubiquitination. In terms of biological role, component of an E3 ubiquitin ligase complex that plays a central role in blue light-dependent circadian cycles. Acts as a blue light photoreceptor, due to the presence of FMN, that mediates light-regulated protein degradation of critical clock components by targeting them to the proteasome complex. The SCF(ADO3) E3 ubiquitin ligase complex is involved in the regulation of circadian clock-dependent processes including transition to flowering time, hypocotyl elongation, cotyledons and leaf movement rhythms. Forms a complex with 'GIGANTEA' (GI) to regulate 'CONSTANS' (CO) expression. Promotes CO expression during the light period of long days by decreasing the stability of CDF1 and CDF2 and by interacting directly with the CO protein and stabilizing it. ADO3 function is mainly GI dependent. Does not act as a regulator of CDF1 transcription. The interactions of ADO1/ZTL and ADO2 with ADO3 prevent its interaction with CDF1. This Arabidopsis thaliana (Mouse-ear cress) protein is Adagio protein 3 (ADO3).